The sequence spans 71 residues: MPIVKVRENEPFEVALRRFKRSCEKAGVLSEIRRREYYEKPTQVRKRKQAAAVKRHMKRLNREQQRRQRPY.

The interval 40–71 (KPTQVRKRKQAAAVKRHMKRLNREQQRRQRPY) is disordered. Residues 43 to 59 (QVRKRKQAAAVKRHMKR) are compositionally biased toward basic residues. The segment covering 60 to 71 (LNREQQRRQRPY) has biased composition (basic and acidic residues).

The protein belongs to the bacterial ribosomal protein bS21 family.

The chain is Small ribosomal subunit protein bS21 from Halorhodospira halophila (strain DSM 244 / SL1) (Ectothiorhodospira halophila (strain DSM 244 / SL1)).